Consider the following 119-residue polypeptide: Fluoride-specific ion channel FluC (119 aa).

The next 4 membrane-spanning stretches (helical) occupy residues 5-25 (IIPLSIGAALGATARWLLNLA), 30-50 (LSPATGNLFANWTGAFLIGIF), 59-79 (WKLLLITGFLGSLTTLSGFSL), and 92-112 (SALANIFLHTAGSLLLTWLGL). Residues G69 and T72 each contribute to the Na(+) site.

The protein belongs to the fluoride channel Fluc/FEX (TC 1.A.43) family.

The protein resides in the cell inner membrane. The catalysed reaction is fluoride(in) = fluoride(out). Its activity is regulated as follows. Na(+) is not transported, but it plays an essential structural role and its presence is essential for fluoride channel function. In terms of biological role, fluoride-specific ion channel. Important for reducing fluoride concentration in the cell, thus reducing its toxicity. The polypeptide is Fluoride-specific ion channel FluC (Neisseria meningitidis serogroup A / serotype 4A (strain DSM 15465 / Z2491)).